A 249-amino-acid chain; its full sequence is Aspartate/glutamate leucyltransferase (249 aa).

This sequence belongs to the R-transferase family. Bpt subfamily.

Its subcellular location is the cytoplasm. The catalysed reaction is N-terminal L-glutamyl-[protein] + L-leucyl-tRNA(Leu) = N-terminal L-leucyl-L-glutamyl-[protein] + tRNA(Leu) + H(+). It catalyses the reaction N-terminal L-aspartyl-[protein] + L-leucyl-tRNA(Leu) = N-terminal L-leucyl-L-aspartyl-[protein] + tRNA(Leu) + H(+). In terms of biological role, functions in the N-end rule pathway of protein degradation where it conjugates Leu from its aminoacyl-tRNA to the N-termini of proteins containing an N-terminal aspartate or glutamate. This is Aspartate/glutamate leucyltransferase from Brucella melitensis biotype 2 (strain ATCC 23457).